A 1509-amino-acid polypeptide reads, in one-letter code: ABC transporter G family member 38 (1509 aa).

An ABC transporter 1 domain is found at 196–467; sequence LGLVGLNFAK…FERCGFRCPE (272 aa). Position 229-236 (229-236) interacts with ATP; that stretch reads GPPSSGKT. Residues 545–758 form the ABC transmembrane type-2 1 domain; it reads ELLKTSCSKE…AYIAFSSNEM (214 aa). The next 7 helical transmembrane spans lie at 563–583, 598–618, 651–671, 682–702, 707–727, 733–753, and 791–811; these read FVYI…STVF, IYIG…FADL, IPSS…TMGF, LLVV…TAGL, VVTN…GGFI, IPKW…YIAF, and YWIA…LFSL. Residues 908-1160 form the ABC transporter 2 domain; the sequence is MSFNEINYYV…KVVEYFEAIP (253 aa). ATP is bound at residue 953–960; sequence GVSGAGKT. The 215-residue stretch at 1233-1447 folds into the ABC transmembrane type-2 2 domain; that stretch reads NQFKLCLWKQ…TVYGLIVSQY (215 aa). The next 7 membrane-spanning stretches (helical) occupy residues 1252 to 1272, 1284 to 1304, 1336 to 1356, 1367 to 1387, 1397 to 1417, 1425 to 1445, and 1478 to 1498; these read YNLV…TIFW, LLVI…ENSV, VVVE…IVYP, FFWF…YGMM, VASI…GFFI, WWVW…LIVS, and FMGV…FTYA.

It belongs to the ABC transporter superfamily. ABCG family. PDR (TC 3.A.1.205) subfamily.

It is found in the membrane. May be a general defense protein. The polypeptide is ABC transporter G family member 38 (Oryza sativa subsp. japonica (Rice)).